Reading from the N-terminus, the 173-residue chain is Dual-action ribosomal maturation protein DarP (173 aa).

This sequence belongs to the DarP family.

The protein resides in the cytoplasm. In terms of biological role, member of a network of 50S ribosomal subunit biogenesis factors which assembles along the 30S-50S interface, preventing incorrect 23S rRNA structures from forming. Promotes peptidyl transferase center (PTC) maturation. The chain is Dual-action ribosomal maturation protein DarP from Pseudomonas putida (strain ATCC 700007 / DSM 6899 / JCM 31910 / BCRC 17059 / LMG 24140 / F1).